Consider the following 565-residue polypeptide: CTP synthase (565 aa).

The interval Met1–Leu272 is amidoligase domain. Ser18 lines the CTP pocket. Ser18 serves as a coordination point for UTP. Residue Ser19–Ile24 participates in ATP binding. L-glutamine is bound at residue Tyr59. Asp76 serves as a coordination point for ATP. Positions 76 and 146 each coordinate Mg(2+). CTP-binding positions include Asp153–Glu155, Lys193–Gln198, and Lys229. UTP-binding positions include Lys193–Gln198 and Lys229. In terms of domain architecture, Glutamine amidotransferase type-1 spans Thr299–Gly543. Gly363 serves as a coordination point for L-glutamine. The active-site Nucleophile; for glutamine hydrolysis is Cys390. L-glutamine-binding positions include Leu391–Gln394, Glu414, and Arg471. Residues His516 and Glu518 contribute to the active site.

Belongs to the CTP synthase family. Homotetramer.

It catalyses the reaction UTP + L-glutamine + ATP + H2O = CTP + L-glutamate + ADP + phosphate + 2 H(+). The enzyme catalyses L-glutamine + H2O = L-glutamate + NH4(+). It carries out the reaction UTP + NH4(+) + ATP = CTP + ADP + phosphate + 2 H(+). Its pathway is pyrimidine metabolism; CTP biosynthesis via de novo pathway; CTP from UDP: step 2/2. With respect to regulation, allosterically activated by GTP, when glutamine is the substrate; GTP has no effect on the reaction when ammonia is the substrate. The allosteric effector GTP functions by stabilizing the protein conformation that binds the tetrahedral intermediate(s) formed during glutamine hydrolysis. Inhibited by the product CTP, via allosteric rather than competitive inhibition. Functionally, catalyzes the ATP-dependent amination of UTP to CTP with either L-glutamine or ammonia as the source of nitrogen. Regulates intracellular CTP levels through interactions with the four ribonucleotide triphosphates. The polypeptide is CTP synthase (Chlorobaculum tepidum (strain ATCC 49652 / DSM 12025 / NBRC 103806 / TLS) (Chlorobium tepidum)).